A 382-amino-acid chain; its full sequence is Protein arginine N-methyltransferase 2 (382 aa).

ANK repeat units lie at residues 22–46 and 48–80; these read AAQTAAPSVLADLLAEGAPAWFQDD and LGWSCLHYAAERKEPECLEVLLQGGAVWNAVDK. The region spanning 134-382 is the RMT2 domain; sequence KTSAGDNLVF…RLPIAKMSLI (249 aa). Residues Phe-143, Met-177, 205 to 210, 228 to 230, 255 to 256, and Asp-284 contribute to the S-adenosyl-L-methionine site; these read FGLGIV, EAH, and WQ.

The protein belongs to the class I-like SAM-binding methyltransferase superfamily. RMT2 methyltransferase family. As to quaternary structure, monomer.

The protein resides in the cytoplasm. The protein localises to the nucleus. Its function is as follows. S-adenosyl-L-methionine-dependent protein-arginine N-methyltransferase that methylates the delta-nitrogen atom of arginine residues to form N5-methylarginine (type IV) in target proteins. Monomethylates ribosomal protein L12. The chain is Protein arginine N-methyltransferase 2 from Cryptococcus neoformans var. neoformans serotype D (strain JEC21 / ATCC MYA-565) (Filobasidiella neoformans).